A 235-amino-acid chain; its full sequence is Phosphoribosylaminoimidazole-succinocarboxamide synthase (235 aa).

This sequence belongs to the SAICAR synthetase family.

It carries out the reaction 5-amino-1-(5-phospho-D-ribosyl)imidazole-4-carboxylate + L-aspartate + ATP = (2S)-2-[5-amino-1-(5-phospho-beta-D-ribosyl)imidazole-4-carboxamido]succinate + ADP + phosphate + 2 H(+). The protein operates within purine metabolism; IMP biosynthesis via de novo pathway; 5-amino-1-(5-phospho-D-ribosyl)imidazole-4-carboxamide from 5-amino-1-(5-phospho-D-ribosyl)imidazole-4-carboxylate: step 1/2. The sequence is that of Phosphoribosylaminoimidazole-succinocarboxamide synthase from Clostridium beijerinckii (strain ATCC 51743 / NCIMB 8052) (Clostridium acetobutylicum).